A 314-amino-acid polypeptide reads, in one-letter code: Ribosomal RNA small subunit methyltransferase H 2 (314 aa).

S-adenosyl-L-methionine contacts are provided by residues 33 to 35 (AGH), Asp53, Tyr80, Asp101, and Gln108. The disordered stretch occupies residues 293 to 314 (KELEENSRSKSAKLRVFEKNDL).

It belongs to the methyltransferase superfamily. RsmH family.

The protein resides in the cytoplasm. It carries out the reaction cytidine(1402) in 16S rRNA + S-adenosyl-L-methionine = N(4)-methylcytidine(1402) in 16S rRNA + S-adenosyl-L-homocysteine + H(+). Functionally, specifically methylates the N4 position of cytidine in position 1402 (C1402) of 16S rRNA. This chain is Ribosomal RNA small subunit methyltransferase H 2, found in Agathobacter rectalis (strain ATCC 33656 / DSM 3377 / JCM 17463 / KCTC 5835 / VPI 0990) (Eubacterium rectale).